The primary structure comprises 296 residues: MSVLYPSLEDLKVGQVIQAQARASPMMPTVMPTLPASMASAPPLSELYPNLAELESYMGLSLSSQEVQKNLSQIPDGDNMVITSPGPGQVTAPVSGNDLGVLRAEIKPGVREIHLCKDERGKTGLRLQAVDKGLFVQLVQANTPASLVGLRFGDQILQIDGCDCAGWSTHKAQKALKKASAEKIVMVVRDRPFQRTVTMHKDSSGQVGFFIKKGKIVSVVKGSSAARNGLLTNHYVCEVNGQNVIGLKDKKIIEILTTAGNVITLTIIPTVIYEHMIKKLSPLLLHHTMDHSIPDT.

PDZ domains follow at residues 112–191 and 196–271; these read EIHL…VRDR and TVTM…IPTV.

As to quaternary structure, monomer and homodimer. Interacts with SDCBP. Interacts with TM4SF1.

The protein resides in the cytoplasm. The protein localises to the nucleus. It localises to the nucleolus. It is found in the nucleoplasm. Its subcellular location is the cell membrane. The protein resides in the nucleus speckle. In terms of biological role, binds phosphatidylinositol 4,5-bisphosphate (PIP2). May play a role in the organization of nuclear PIP2, cell division and cell survival. This chain is Syntenin-2 (Sdcbp2), found in Rattus norvegicus (Rat).